The primary structure comprises 622 residues: WD repeat-containing protein 46 (622 aa).

The tract at residues Met-1–Glu-135 is disordered. The residue at position 41 (Ser-41) is a Phosphoserine. Over residues Glu-106–Lys-118 the composition is skewed to basic and acidic residues. WD repeat units follow at residues Leu-192 to Asn-233, Val-234 to Ile-271, Val-314 to Lys-353, Cys-356 to Ser-395, and Thr-398 to Ser-435. A disordered region spans residues Ala-547–Pro-622. The span at Val-571–Gln-582 shows a compositional bias: basic and acidic residues.

In terms of assembly, part of the small subunit (SSU) processome, composed of more than 70 proteins and the RNA chaperone small nucleolar RNA (snoRNA) U3. Interacts with DDX21, NCL, NOP2 and EBNA1BP2.

The protein resides in the nucleus. The protein localises to the nucleolus. Scaffold component of the nucleolar structure. Required for localization of DDX21 and NCL to the granular compartment of the nucleolus. Part of the small subunit (SSU) processome, first precursor of the small eukaryotic ribosomal subunit. During the assembly of the SSU processome in the nucleolus, many ribosome biogenesis factors, an RNA chaperone and ribosomal proteins associate with the nascent pre-rRNA and work in concert to generate RNA folding, modifications, rearrangements and cleavage as well as targeted degradation of pre-ribosomal RNA by the RNA exosome. This is WD repeat-containing protein 46 (Wdr46) from Mus musculus (Mouse).